The chain runs to 363 residues: Aminomethyltransferase (363 aa).

This sequence belongs to the GcvT family. The glycine cleavage system is composed of four proteins: P, T, L and H.

It catalyses the reaction N(6)-[(R)-S(8)-aminomethyldihydrolipoyl]-L-lysyl-[protein] + (6S)-5,6,7,8-tetrahydrofolate = N(6)-[(R)-dihydrolipoyl]-L-lysyl-[protein] + (6R)-5,10-methylene-5,6,7,8-tetrahydrofolate + NH4(+). The glycine cleavage system catalyzes the degradation of glycine. The protein is Aminomethyltransferase of Thermosipho melanesiensis (strain DSM 12029 / CIP 104789 / BI429).